A 349-amino-acid chain; its full sequence is Putative nuclease HARBI1 (349 aa).

The region spanning 148–300 (VDCMHVAIKA…IILACCVLHN (153 aa)) is the DDE Tnp4 domain. A divalent metal cation-binding residues include D149, D199, D225, and E261.

Belongs to the HARBI1 family. In terms of assembly, interacts with NAIF1. Requires a divalent metal cation as cofactor. As to expression, detected in brain.

The protein resides in the nucleus. Its subcellular location is the cytoplasm. Functionally, transposase-derived protein that may have nuclease activity (Potential). Does not have transposase activity. The polypeptide is Putative nuclease HARBI1 (HARBI1) (Bos taurus (Bovine)).